Consider the following 173-residue polypeptide: NADH-ubiquinone oxidoreductase chain 6 (173 aa).

A run of 5 helical transmembrane segments spans residues 1 to 21, 27 to 47, 48 to 68, 87 to 107, and 139 to 159; these read MTYF…AVAS, YGVV…LSLG, VSFV…VVFV, VVGY…VGGL, and CGVG…FVVL.

The protein belongs to the complex I subunit 6 family.

The protein localises to the mitochondrion membrane. The enzyme catalyses a ubiquinone + NADH + 5 H(+)(in) = a ubiquinol + NAD(+) + 4 H(+)(out). In terms of biological role, core subunit of the mitochondrial membrane respiratory chain NADH dehydrogenase (Complex I) that is believed to belong to the minimal assembly required for catalysis. Complex I functions in the transfer of electrons from NADH to the respiratory chain. The immediate electron acceptor for the enzyme is believed to be ubiquinone. The sequence is that of NADH-ubiquinone oxidoreductase chain 6 (MT-ND6) from Synthliboramphus wumizusume (Japanese murrelet).